Here is a 168-residue protein sequence, read N- to C-terminus: Transcription antitermination protein NusB (168 aa).

Belongs to the NusB family.

Involved in transcription antitermination. Required for transcription of ribosomal RNA (rRNA) genes. Binds specifically to the boxA antiterminator sequence of the ribosomal RNA (rrn) operons. The protein is Transcription antitermination protein NusB of Chlamydia trachomatis serovar D (strain ATCC VR-885 / DSM 19411 / UW-3/Cx).